Here is a 473-residue protein sequence, read N- to C-terminus: Glutamate--tRNA ligase (473 aa).

Residues 11–21 (PSPTGFLHIGG) carry the 'HIGH' region motif. Residues 240–244 (KLSKR) carry the 'KMSKS' region motif. Lys-243 serves as a coordination point for ATP.

It belongs to the class-I aminoacyl-tRNA synthetase family. Glutamate--tRNA ligase type 1 subfamily. In terms of assembly, monomer.

Its subcellular location is the cytoplasm. It carries out the reaction tRNA(Glu) + L-glutamate + ATP = L-glutamyl-tRNA(Glu) + AMP + diphosphate. Catalyzes the attachment of glutamate to tRNA(Glu) in a two-step reaction: glutamate is first activated by ATP to form Glu-AMP and then transferred to the acceptor end of tRNA(Glu). The protein is Glutamate--tRNA ligase of Rhodopseudomonas palustris (strain BisB5).